We begin with the raw amino-acid sequence, 252 residues long: Neurexophilin-3 (252 aa).

The signal sequence occupies residues 1 to 22; sequence MQLTRCCFVFLVQGSLYLVICG. Residues 23-75 are II; it reads QDDGPPGSEDPERDDHEGQPRPRVPRKRGHISPKSRPMANSTLLGLLAPPGEA. Positions 27–58 are disordered; that stretch reads PPGSEDPERDDHEGQPRPRVPRKRGHISPKSR. The span at 45-55 shows a compositional bias: basic residues; the sequence is RVPRKRGHISP. Residues Asn-62, Asn-127, Asn-137, and Asn-143 are each glycosylated (N-linked (GlcNAc...) asparagine). Residues 76 to 157 form an III region; the sequence is WGILGQPPNR…LVPPSKAVEF (82 aa). Positions 158-166 are IV (linker domain); it reads HQEQQIFIE. The segment at 167–252 is v (Cys-rich); the sequence is AKASKIFNCR…HSDTPYYPSG (86 aa).

Belongs to the neurexophilin family. May be proteolytically processed at the boundary between the N-terminal non-conserved and the central conserved domain in neuron-like cells. As to expression, highest level in brain.

The protein localises to the secreted. Its function is as follows. May be signaling molecules that resemble neuropeptides. Ligand for alpha-neurexins. The sequence is that of Neurexophilin-3 (NXPH3) from Homo sapiens (Human).